The sequence spans 234 residues: Small ribosomal subunit protein uS3 (234 aa).

The KH type-2 domain occupies 39 to 107 (IRKMLKERLK…EVHLNLVEVR (69 aa)). Over residues 215-227 (QERRLQESGEQRA) the composition is skewed to basic and acidic residues. A disordered region spans residues 215–234 (QERRLQESGEQRARSGRQAA).

The protein belongs to the universal ribosomal protein uS3 family. As to quaternary structure, part of the 30S ribosomal subunit. Forms a tight complex with proteins S10 and S14.

Functionally, binds the lower part of the 30S subunit head. Binds mRNA in the 70S ribosome, positioning it for translation. This chain is Small ribosomal subunit protein uS3, found in Maricaulis maris (strain MCS10) (Caulobacter maris).